The following is a 109-amino-acid chain: Flagellar hook-basal body complex protein FliE (109 aa).

The protein belongs to the FliE family.

It is found in the bacterial flagellum basal body. This chain is Flagellar hook-basal body complex protein FliE, found in Pseudomonas aeruginosa (strain LESB58).